We begin with the raw amino-acid sequence, 457 residues long: Probable ubiquitin carboxyl-terminal hydrolase 16 (457 aa).

The interval 34–97 is disordered; the sequence is VSSPSVPEGT…DGANDFVDED (64 aa). Residues 45–67 show a composition bias toward polar residues; it reads TVLNNPKQSTVSRKSFSAPTSPT. Ser-61 carries the post-translational modification Phosphoserine. At Thr-64 the chain carries Phosphothreonine. Ser-65 carries the post-translational modification Phosphoserine. In terms of domain architecture, USP spans 125–429; sequence PGLVNLGNTC…QAYILQYKRK (305 aa). The active-site Nucleophile is the Cys-134. Residue His-388 is the Proton acceptor of the active site. The interval 434 to 457 is disordered; sequence SKHKLNTENTVTKTSNKKRRKISF. Residues 448 to 457 are compositionally biased toward basic residues; the sequence is SNKKRRKISF.

Belongs to the peptidase C19 family.

It carries out the reaction Thiol-dependent hydrolysis of ester, thioester, amide, peptide and isopeptide bonds formed by the C-terminal Gly of ubiquitin (a 76-residue protein attached to proteins as an intracellular targeting signal).. This chain is Probable ubiquitin carboxyl-terminal hydrolase 16 (ubp16), found in Schizosaccharomyces pombe (strain 972 / ATCC 24843) (Fission yeast).